The following is a 202-amino-acid chain: UPF0056 membrane protein CPn_1010/CP_0843/CPj1010/CpB1048 (202 aa).

The next 6 membrane-spanning stretches (helical) occupy residues Leu-7–Leu-27, Val-39–Arg-59, Phe-61–Phe-81, Pro-105–Leu-125, Ile-137–Ser-157, and Phe-175–Phe-195.

It belongs to the UPF0056 (MarC) family.

Its subcellular location is the cell membrane. The polypeptide is UPF0056 membrane protein CPn_1010/CP_0843/CPj1010/CpB1048 (Chlamydia pneumoniae (Chlamydophila pneumoniae)).